The chain runs to 68 residues: Small integral membrane protein 10-like protein 1 (68 aa).

The tract at residues 1–21 (MAPAAAPSSLAVRASSPAATP) is disordered.

The protein is Small integral membrane protein 10-like protein 1 of Homo sapiens (Human).